The chain runs to 292 residues: Phosphotriesterase homology protein (292 aa).

Histidine 12, histidine 14, and glutamate 125 together coordinate Zn(2+). Histidine 148–asparagine 149 serves as a coordination point for beta-D-glucose. Position 158 (histidine 158) interacts with Zn(2+). The beta-D-glucose site is built by glycine 176, aspartate 178, and arginine 181. Residues histidine 186 and aspartate 243 each contribute to the Zn(2+) site. Residues aspartate 280 and arginine 284 each contribute to the beta-D-glucose site.

Belongs to the metallo-dependent hydrolases superfamily. Phosphotriesterase family. Monomer. The cofactor is Zn(2+).

With respect to regulation, activity is higher in the enzyme containing Mn(2+) than that containing Zn(2+). Catalyzes the hydrolysis of phosphorylated glyceryl acetates in which the presence of a phosphate group is required for the enzymatic hydrolysis. Hydrolyzes a dibutyl glycerol derivative suggesting it acts on phosphoglycerol substrates with a butyrate leaving group. Also active with aromatic acetates and propionates. No activity with various sugar phosphates, with various nitrophenylphosphate or nitrophenylphosphonate derivatives, or with phosphorylated or non-phosphorylated sugar lactones tested. Does not hydrolyze non-phosphorylated carboxyesters with long chain leaving groups. No general esterase, aminopeptidase, sulfatase, phosphatase, carbonic anhydrase, phosphodiesterase, and phosphotriesterase activities detected when tested with the following non-specific substrates: p-nitrophenyl acetate, L-alanine nitroanilide, p-nitrophenyl sulfate, bis(p-nitrophenyl) phosphate, paraoxon, and p-nitrophenyl phosphate. In Escherichia coli (strain K12), this protein is Phosphotriesterase homology protein.